The sequence spans 787 residues: Serine proteinase stubble (787 aa).

The segment at 1 to 22 (MKQPTLIRPRLRHRRSTPAAAT) is disordered. At 1 to 58 (MKQPTLIRPRLRHRRSTPAAATKMCPKRHWLVNNRAAGSRGSGGAAARSRRSLDQIVE) the chain is on the cytoplasmic side. A helical; Signal-anchor for type II membrane protein membrane pass occupies residues 59–80 (VLVALIVVNCLATAAAALITPP). The Extracellular portion of the chain corresponds to 81 to 787 (DSLESLGSLG…FTPWILEHVR (707 aa)). Residue N177 is glycosylated (N-linked (GlcNAc...) asparagine). The tract at residues 225–516 (AGTLVIRPSG…EISDSSIPDA (292 aa)) is disordered. 5 stretches are compositionally biased toward low complexity: residues 262–280 (SASH…NPNS), 287–303 (QQQQ…NHWQ), 358–368 (PSTSTSTTSTS), 393–438 (SLAA…RTTT), and 449–485 (TTAT…VTSS). Positions 502 to 512 (GIETNEISDSS) are enriched in polar residues. 2 disulfide bridges follow: C532–C660 and C575–C591. Residues 544–787 (IVGGKSAAFG…FTPWILEHVR (244 aa)) enclose the Peptidase S1 domain. Residues H590 and D640 each act as charge relay system in the active site. The N-linked (GlcNAc...) asparagine glycan is linked to N672. 2 cysteine pairs are disulfide-bonded: C704–C723 and C734–C763. The active-site Charge relay system is S738.

Belongs to the peptidase S1 family. May activate itself by proteolytic cleavage.

The protein localises to the membrane. Functionally, hormone dependent protease required for epithelial morphogenesis, including the formation of bristles, legs, and wings. Has a dual function, detaches imaginal disk cells from extracellular matrices through its extracellular proteolytic domain and transmits an outside-to-inside signal to its intracellular domain to modify the cytoskeleton during morphogenesis. This is Serine proteinase stubble (Sb) from Drosophila melanogaster (Fruit fly).